Here is a 274-residue protein sequence, read N- to C-terminus: uncharacterized protein (274 aa).

The segment covering 1 to 17 (MTQLTNFSESFSNQNSN) has biased composition (low complexity). 2 disordered regions span residues 1–38 (MTQL…YYVR) and 222–274 (ELGT…MEFE). The segment covering 18–28 (LHQPYNFNSHQ) has biased composition (polar residues). Residues 29-38 (PPEENHYYVR) are compositionally biased toward basic and acidic residues. Polar residues-rich tracts occupy residues 239–249 (PMASPTGSSQI) and 256–265 (SPNSLTNGSV).

This is an uncharacterized protein from Caenorhabditis elegans.